Here is a 445-residue protein sequence, read N- to C-terminus: UDP-glucuronic acid decarboxylase 2 (445 aa).

A2 bears the N-acetylalanine mark. At 2–43 the chain is on the cytoplasmic side; the sequence is ASELINRRHETDQPTADAYYPKPIKPWFTVTRPMRYMLREQR. Residues 44-64 traverse the membrane as a helical; Signal-anchor for type II membrane protein segment; that stretch reads LIFVLVGIAIATLVFTIFPRS. At 65-445 the chain is on the lumenal side; that stretch reads TQSTPYSDPF…AATTTKTTSA (381 aa). 149 to 174 is an NAD(+) binding site; that stretch reads DNFFTGRKENVMHHFSNPNFEMIRHD. Position 258 (R258) interacts with substrate. Catalysis depends on Y261, which acts as the Proton acceptor. An NAD(+)-binding site is contributed by 261–265; that stretch reads YDEGK. N290 contacts substrate. R302 lines the NAD(+) pocket. Substrate contacts are provided by residues 303–307, 320–327, and 387–391; these read VVSNF, YGDGKQTR, and DPHKR.

Belongs to the NAD(P)-dependent epimerase/dehydratase family. UDP-glucuronic acid decarboxylase subfamily. As to quaternary structure, homodimer. The cofactor is NAD(+). In terms of tissue distribution, ubiquitous.

It is found in the golgi apparatus. Its subcellular location is the golgi stack membrane. It carries out the reaction UDP-alpha-D-glucuronate + H(+) = UDP-alpha-D-xylose + CO2. It functions in the pathway nucleotide-sugar biosynthesis; UDP-alpha-D-xylose biosynthesis; UDP-alpha-D-xylose from UDP-alpha-D-glucuronate: step 1/1. Functionally, catalyzes the NAD-dependent decarboxylation of UDP-glucuronic acid to UDP-xylose. Necessary for the biosynthesis of the core tetrasaccharide in glycosaminoglycan biosynthesis. This Arabidopsis thaliana (Mouse-ear cress) protein is UDP-glucuronic acid decarboxylase 2 (UXS2).